A 363-amino-acid chain; its full sequence is Forkhead box protein I1 (363 aa).

Positions M1–P18 are enriched in low complexity. Disordered stretches follow at residues M1–Q24, D210–A269, and T344–Y363. The segment at residues R125 to K219 is a DNA-binding region (fork-head). Basic and acidic residues predominate over residues K231–E243. Low complexity-rich tracts occupy residues S244 to P258 and Q347 to Y363.

It is found in the nucleus. In terms of biological role, transcription factor. Essential for ventral specification of the early cephalic (head) ectoderm during gastrulation, playing a role in the 'non-neural' versus 'neural' cell fate choice. Binds to DNA via the target sequence 5'-[AG]TAAA[CT]A-3', with 5'-ATAAACA-3' being the preferred binding site. This chain is Forkhead box protein I1, found in Xenopus tropicalis (Western clawed frog).